A 273-amino-acid polypeptide reads, in one-letter code: Testis-specific serine/threonine-protein kinase 6 (273 aa).

A Protein kinase domain is found at 12–267; the sequence is YKLGRTIGEG…AGQVARNCWL (256 aa). Residues 18–26 and K41 contribute to the ATP site; that span reads IGEGSYSKV. Catalysis depends on D135, which acts as the Proton acceptor.

This sequence belongs to the protein kinase superfamily. CAMK Ser/Thr protein kinase family. Microtubule inner protein component of sperm flagellar doublet microtubules. Interacts with HSP90; this interaction stabilizes and activates TSSK6. Interacts with the heat shock proteins HSPCB, HSPA8 and HSPA1A. These interactions appear to be required for TSSK6 kinase activity. Interacts with TSACC; this interaction is direct and recruits TSACC to HSP90, which is essential for kinase activity. Mg(2+) is required as a cofactor. Post-translationally, autophosphorylated. In terms of processing, ubiquitinated; HSP90 activity negatively regulates ubiquitination and degradation. As to expression, highly expressed in testis. Expressed at lower levels in colon, small intestine, ovary, prostate, thymus, spleen and peripheral blood leukocytes.

The protein resides in the cytoplasm. It is found in the cytoskeleton. It localises to the flagellum axoneme. The protein localises to the nucleus. The catalysed reaction is L-seryl-[protein] + ATP = O-phospho-L-seryl-[protein] + ADP + H(+). It catalyses the reaction L-threonyl-[protein] + ATP = O-phospho-L-threonyl-[protein] + ADP + H(+). Its function is as follows. Serine/threonine-protein kinase component of the sperm flagellar doublet microtubules. May act as a regulator of sperm motility by mediating phosphorylation of sperm doublet microtubule proteins. Plays a role in DNA condensation during postmeiotic chromatin remodeling and histone-to-protamine transition during spermatogenesis. The chain is Testis-specific serine/threonine-protein kinase 6 from Homo sapiens (Human).